Consider the following 109-residue polypeptide: ATP-dependent Clp protease adapter protein ClpS (109 aa).

It belongs to the ClpS family. As to quaternary structure, binds to the N-terminal domain of the chaperone ClpA.

Functionally, involved in the modulation of the specificity of the ClpAP-mediated ATP-dependent protein degradation. The chain is ATP-dependent Clp protease adapter protein ClpS from Lawsonia intracellularis (strain PHE/MN1-00).